A 1114-amino-acid polypeptide reads, in one-letter code: Transcriptional repressor NF-X1 (1114 aa).

Residues 9 to 26 (GTFKFNTDAAEFIPQERK) are interaction with PABPC1 and PABC4. Disordered stretches follow at residues 20-220 (FIPQ…CRKP), 232-287 (QRRY…PTKS), and 299-325 (KSSR…FPRG). Phosphoserine occurs at positions 50, 81, 92, 126, 130, and 147. 2 stretches are compositionally biased toward polar residues: residues 72-103 (SYAS…NQPW) and 121-142 (LSEQ…SGTN). Basic and acidic residues-rich tracts occupy residues 143 to 156 (PREH…KEVV), 185 to 202 (LRSE…DENT), 232 to 248 (QRRY…EGAR), and 304 to 315 (VNQEKTAVRRQD). Position 320 is a phosphoserine (serine 320). The RING-type; atypical zinc-finger motif lies at 352-403 (CMVCCELVQVTAPVWSCQSCFHVFHLNCIKKWARSPASHADGQSGWRCPACQ). 8 consecutive NF-X1-type zinc fingers follow at residues 447-465 (CPHS…PCPA), 500-519 (CGQH…PCRI), 561-580 (CGSH…PCPR), 626-649 (CGSS…PCSR), 688-707 (CGRH…KCPL), 715-734 (CGLH…TCWQ), 826-848 (CGMH…ACKQ), and 857-878 (CGHP…ACKA). Residues 988 to 1056 (LKFVSDVEKE…KRNVVVTAVR (69 aa)) form the R3H domain. A disordered region spans residues 1071–1095 (ERETQTRPPPPIPHHRHQADKAPGS).

Belongs to the NFX1 family. As to quaternary structure, interacts with PABPC1 and PABPC4. As to expression, ubiquitously expressed, with highest levels in thymus.

Its subcellular location is the nucleus. Binds to the X-box motif of MHC class II genes and represses their expression. May play an important role in regulating the duration of an inflammatory response by limiting the period in which MHC class II molecules are induced by interferon-gamma. Together with PABPC1 or PABPC4, acts as a coactivator for TERT expression. Mediates E2-dependent ubiquitination. In Mus musculus (Mouse), this protein is Transcriptional repressor NF-X1 (Nfx1).